The following is a 93-amino-acid chain: Mitochondrial import inner membrane translocase subunit tim10 (93 aa).

The Twin CX3C motif signature appears at 38 to 63 (CQKKCIPNDYREGDLNKGESVCLDRC). 2 cysteine pairs are disulfide-bonded: Cys-38-Cys-63 and Cys-42-Cys-59.

This sequence belongs to the small Tim family. Heterohexamer; composed of 3 copies of TIM9 and 3 copies of TIM10, named soluble 70 kDa complex. Associates directly with the TIM22 complex, whose core is composed of TIM22 and TIM54. Interacts with the transmembrane regions of multi-pass transmembrane proteins in transit.

The protein localises to the mitochondrion inner membrane. In terms of biological role, mitochondrial intermembrane chaperone that participates in the import and insertion of multi-pass transmembrane proteins into the mitochondrial inner membrane. Also required for the transfer of beta-barrel precursors from the TOM complex to the sorting and assembly machinery (SAM complex) of the outer membrane. Acts as a chaperone-like protein that protects the hydrophobic precursors from aggregation and guide them through the mitochondrial intermembrane space. This Aspergillus fumigatus (strain ATCC MYA-4609 / CBS 101355 / FGSC A1100 / Af293) (Neosartorya fumigata) protein is Mitochondrial import inner membrane translocase subunit tim10 (tim10).